We begin with the raw amino-acid sequence, 359 residues long: Type-1 angiotensin II receptor B (359 aa).

Over 1 to 25 the chain is Extracellular; that stretch reads MILNSSIEDGIKRIQDDCPKAGRHN. N4 is a glycosylation site (N-linked (GlcNAc...) asparagine). Angiotensin II-binding residues include Q15 and D17. 2 disulfide bridges follow: C18-C274 and C101-C180. The chain crosses the membrane as a helical span at residues 26–55; the sequence is YIFVMIPTLYSIIFVVGIFGNSLVVIVIYF. Residues 56–61 are Cytoplasmic-facing; it reads YMKLKT. Residues 62–89 form a helical membrane-spanning segment; the sequence is VASVFLLNLALADLCFLLTLPLWAVYTA. Residues 90-98 are Extracellular-facing; it reads MEYQWPFGN. A helical transmembrane segment spans residues 99–125; that stretch reads HLCKIASASVSFNLYASVFLLTCLSID. Over 126–141 the chain is Cytoplasmic; the sequence is RYLAIVHPMKSRLRRT. Residues 142-165 traverse the membrane as a helical segment; sequence MLVAKVTCIIIWLMAGLASLPAVI. Residues 166-190 are Extracellular-facing; sequence HRNVYFIENTNITVCAFHYESQNST. Angiotensin II is bound at residue R167. The N-linked (GlcNAc...) asparagine glycan is linked to N176. Residues F182, H183, and Y184 each coordinate angiotensin II. An N-linked (GlcNAc...) asparagine glycan is attached at N188. The chain crosses the membrane as a helical span at residues 191 to 216; the sequence is LPIGLGLTKNILGFVFPFVIILTSYT. K199 is a binding site for angiotensin II. The Cytoplasmic portion of the chain corresponds to 217–239; it reads LIWKALKKAYKIQKNTPRNDDIF. A helical transmembrane segment spans residues 240 to 268; that stretch reads RIIMAIVLFFFFSWVPHQIFSFLDVLIQL. The Extracellular segment spans residues 269 to 278; it reads GVIHDCEIAD. A helical membrane pass occupies residues 279–304; that stretch reads VVDTAMPITICIAYFNNCLNPLFYGF. Topologically, residues 305–359 are cytoplasmic; it reads LGKKFKRYFLQLLKYIPPKARSHAGLSTKMSTLSYRPSDNMSSSARKSAYCFEVE. C355 carries the S-palmitoyl cysteine lipid modification.

The protein belongs to the G-protein coupled receptor 1 family. As to quaternary structure, interacts with MAS1. Interacts with ARRB1. Interacts with FLNA (via filamin repeat 21); increases PKA-mediated phosphorylation of FLNA. In terms of processing, C-terminal Ser or Thr residues may be phosphorylated.

Its subcellular location is the cell membrane. Its function is as follows. Receptor for angiotensin II, a vasoconstricting peptide, which acts as a key regulator of blood pressure and sodium retention by the kidney. The activated receptor in turn couples to G-alpha proteins G(q) (GNAQ, GNA11, GNA14 or GNA15) and thus activates phospholipase C and increases the cytosolic Ca(2+) concentrations, which in turn triggers cellular responses such as stimulation of protein kinase C. The chain is Type-1 angiotensin II receptor B (Agtr1b) from Mus musculus (Mouse).